A 448-amino-acid chain; its full sequence is Glucose-6-phosphate isomerase (448 aa).

The active-site Proton donor is Glu-290. Active-site residues include His-311 and Lys-425.

Belongs to the GPI family.

It is found in the cytoplasm. It catalyses the reaction alpha-D-glucose 6-phosphate = beta-D-fructose 6-phosphate. The protein operates within carbohydrate biosynthesis; gluconeogenesis. It functions in the pathway carbohydrate degradation; glycolysis; D-glyceraldehyde 3-phosphate and glycerone phosphate from D-glucose: step 2/4. Its function is as follows. Catalyzes the reversible isomerization of glucose-6-phosphate to fructose-6-phosphate. The polypeptide is Glucose-6-phosphate isomerase (Lactococcus lactis subsp. cremoris (strain SK11)).